A 332-amino-acid polypeptide reads, in one-letter code: Holliday junction branch migration complex subunit RuvB (332 aa).

Residues methionine 1–tyrosine 181 are large ATPase domain (RuvB-L). Residues leucine 20, arginine 21, glycine 62, lysine 65, threonine 66, threonine 67, glutamate 128–phenylalanine 130, arginine 171, tyrosine 181, and arginine 218 each bind ATP. Residue threonine 66 coordinates Mg(2+). Residues glutamine 182 to aspartate 252 are small ATPAse domain (RuvB-S). Positions arginine 255–threonine 332 are head domain (RuvB-H). 4 residues coordinate DNA: arginine 291, arginine 310, arginine 312, and arginine 315.

The protein belongs to the RuvB family. Homohexamer. Forms an RuvA(8)-RuvB(12)-Holliday junction (HJ) complex. HJ DNA is sandwiched between 2 RuvA tetramers; dsDNA enters through RuvA and exits via RuvB. An RuvB hexamer assembles on each DNA strand where it exits the tetramer. Each RuvB hexamer is contacted by two RuvA subunits (via domain III) on 2 adjacent RuvB subunits; this complex drives branch migration. In the full resolvosome a probable DNA-RuvA(4)-RuvB(12)-RuvC(2) complex forms which resolves the HJ.

It localises to the cytoplasm. It carries out the reaction ATP + H2O = ADP + phosphate + H(+). In terms of biological role, the RuvA-RuvB-RuvC complex processes Holliday junction (HJ) DNA during genetic recombination and DNA repair, while the RuvA-RuvB complex plays an important role in the rescue of blocked DNA replication forks via replication fork reversal (RFR). RuvA specifically binds to HJ cruciform DNA, conferring on it an open structure. The RuvB hexamer acts as an ATP-dependent pump, pulling dsDNA into and through the RuvAB complex. RuvB forms 2 homohexamers on either side of HJ DNA bound by 1 or 2 RuvA tetramers; 4 subunits per hexamer contact DNA at a time. Coordinated motions by a converter formed by DNA-disengaged RuvB subunits stimulates ATP hydrolysis and nucleotide exchange. Immobilization of the converter enables RuvB to convert the ATP-contained energy into a lever motion, pulling 2 nucleotides of DNA out of the RuvA tetramer per ATP hydrolyzed, thus driving DNA branch migration. The RuvB motors rotate together with the DNA substrate, which together with the progressing nucleotide cycle form the mechanistic basis for DNA recombination by continuous HJ branch migration. Branch migration allows RuvC to scan DNA until it finds its consensus sequence, where it cleaves and resolves cruciform DNA. The chain is Holliday junction branch migration complex subunit RuvB from Streptococcus pyogenes serotype M3 (strain ATCC BAA-595 / MGAS315).